A 351-amino-acid polypeptide reads, in one-letter code: Molybdenum import ATP-binding protein ModC (351 aa).

The 229-residue stretch at 1-229 (MLEINIHQQL…DILADWQSET (229 aa)) folds into the ABC transporter domain. 31–38 (GRSGAGKS) lines the ATP pocket. Positions 290 to 351 (HSSIRNILNG…IYVQIKSVSL (62 aa)) constitute a Mop domain.

The protein belongs to the ABC transporter superfamily. Molybdate importer (TC 3.A.1.8) family. As to quaternary structure, the complex is composed of two ATP-binding proteins (ModC), two transmembrane proteins (ModB) and a solute-binding protein (ModA).

The protein localises to the cell inner membrane. The catalysed reaction is molybdate(out) + ATP + H2O = molybdate(in) + ADP + phosphate + H(+). Functionally, part of the ABC transporter complex ModABC involved in molybdenum import. Responsible for energy coupling to the transport system. This chain is Molybdenum import ATP-binding protein ModC, found in Haemophilus ducreyi (strain 35000HP / ATCC 700724).